Reading from the N-terminus, the 629-residue chain is tRNA uridine 5-carboxymethylaminomethyl modification enzyme MnmG (629 aa).

FAD-binding positions include 13-18 (GGGHAG), valine 125, and serine 180. 273-287 (GPRYCPSIEDKVMRF) contacts NAD(+). Glutamine 370 provides a ligand contact to FAD.

This sequence belongs to the MnmG family. As to quaternary structure, homodimer. Heterotetramer of two MnmE and two MnmG subunits. FAD is required as a cofactor.

The protein localises to the cytoplasm. Its function is as follows. NAD-binding protein involved in the addition of a carboxymethylaminomethyl (cmnm) group at the wobble position (U34) of certain tRNAs, forming tRNA-cmnm(5)s(2)U34. The sequence is that of tRNA uridine 5-carboxymethylaminomethyl modification enzyme MnmG from Escherichia coli O139:H28 (strain E24377A / ETEC).